The sequence spans 661 residues: Arginine--tRNA ligase, cytoplasmic (661 aa).

Positions 1 to 72 (MEARVAEAAA…QEEQSKTVKS (72 aa)) are could be involved in the assembly of the multisynthetase complex. L-arginine-binding positions include 201–203 (SPN), His212, Tyr385, Asp389, and Gln413. Residues 202–213 (PNIAKEMHVGHL) carry the 'HIGH' region motif. Residues 530-544 (NTAAYLLYAFTRIRA) are interaction with tRNA.

The protein belongs to the class-I aminoacyl-tRNA synthetase family. As to quaternary structure, monomer; also part of a multisubunit complex that groups tRNA ligases for Arg, Asp, Glu, Gln, Ile, Leu, Lys, Met and Pro.

It localises to the cytoplasm. It is found in the cytosol. The catalysed reaction is tRNA(Arg) + L-arginine + ATP = L-arginyl-tRNA(Arg) + AMP + diphosphate. Its function is as follows. Forms part of a macromolecular complex that catalyzes the attachment of specific amino acids to cognate tRNAs during protein synthesis. The chain is Arginine--tRNA ligase, cytoplasmic (RARS1) from Gallus gallus (Chicken).